The chain runs to 295 residues: Acetylglutamate kinase (295 aa).

Residues 64-65 (GG), Arg-86, and Asn-190 contribute to the substrate site.

The protein belongs to the acetylglutamate kinase family. ArgB subfamily.

It localises to the cytoplasm. The enzyme catalyses N-acetyl-L-glutamate + ATP = N-acetyl-L-glutamyl 5-phosphate + ADP. It participates in amino-acid biosynthesis; L-arginine biosynthesis; N(2)-acetyl-L-ornithine from L-glutamate: step 2/4. Catalyzes the ATP-dependent phosphorylation of N-acetyl-L-glutamate. The protein is Acetylglutamate kinase of Heliobacterium modesticaldum (strain ATCC 51547 / Ice1).